Consider the following 302-residue polypeptide: Serine/threonine-protein phosphatase alpha-2 isoform (302 aa).

Positions 62, 64, 90, and 122 each coordinate Mn(2+). His-123 serves as the catalytic Proton donor. Mn(2+)-binding residues include His-171 and His-246.

It belongs to the PPP phosphatase family. PP-1 subfamily. As to quaternary structure, interacts with Nop17l. Interacts with uri; uri inhibits Pp1-87B phosphatase activity. Interacts with Rif1. The cofactor is Mn(2+).

It localises to the cytoplasm. It carries out the reaction O-phospho-L-seryl-[protein] + H2O = L-seryl-[protein] + phosphate. It catalyses the reaction O-phospho-L-threonyl-[protein] + H2O = L-threonyl-[protein] + phosphate. Its function is as follows. Is essential for the regulation of mitotic chromosomal segregation as well as regulation of chromatin condensation during interphase. The chain is Serine/threonine-protein phosphatase alpha-2 isoform (Pp1-87B) from Drosophila melanogaster (Fruit fly).